A 382-amino-acid polypeptide reads, in one-letter code: Secreted triacylglycerol lipase LIP5 (382 aa).

Cys-40 and Cys-211 are disulfide-bonded. An N-linked (GlcNAc...) asparagine glycan is attached at Asn-115. Catalysis depends on Ser-124, which acts as the Nucleophile. N-linked (GlcNAc...) asparagine glycans are attached at residues Asn-157 and Asn-232. Residues Asp-271 and His-305 contribute to the active site. Residue Asn-346 is glycosylated (N-linked (GlcNAc...) asparagine).

It belongs to the AB hydrolase superfamily. Lipase family. Class Lip subfamily.

Its subcellular location is the secreted. It catalyses the reaction a triacylglycerol + H2O = a diacylglycerol + a fatty acid + H(+). The enzyme catalyses a monoacylglycerol + H2O = glycerol + a fatty acid + H(+). It carries out the reaction a diacylglycerol + H2O = a monoacylglycerol + a fatty acid + H(+). In terms of biological role, secreted lipase that hydrolyzes acylglycerol lipids such as triacylglycerols and consequently releases free fatty acid. Can hydrolyze 4-nitrophenyl palmitate to release 4-nitrophenol and palmitoic acid. Due to an absence of fatty acid synthase genes in Malassezia species, secretory lipases are essential for the yeast to generate free fatty acids from degradation of sebum and assimilate them as lipid sources for growth. Plays important roles not only in lipid metabolism but also in the immune response of host cells and pathogenesis. The polypeptide is Secreted triacylglycerol lipase LIP5 (Malassezia furfur (Pityriasis versicolor infection agent)).